Here is an 86-residue protein sequence, read N- to C-terminus: Anti-adapter protein IraP (86 aa).

Positions 1–36 (MKNLIAELLFKLAQKEEESKELCAQVEALEIIVTAM) form a coiled coil.

Belongs to the IraP family. As to quaternary structure, interacts with RssB.

Its subcellular location is the cytoplasm. Functionally, inhibits RpoS proteolysis by regulating RssB activity, thereby increasing the stability of the sigma stress factor RpoS especially during phosphate starvation, but also in stationary phase and during nitrogen starvation. Its effect on RpoS stability is due to its interaction with RssB, which probably blocks the interaction of RssB with RpoS, and the consequent delivery of the RssB-RpoS complex to the ClpXP protein degradation pathway. This Escherichia coli O127:H6 (strain E2348/69 / EPEC) protein is Anti-adapter protein IraP.